We begin with the raw amino-acid sequence, 97 residues long: Small nuclear ribonucleoprotein Sm D3 (97 aa).

Positions 3–75 (LCIKLLHETQ…IRFLIVPDML (73 aa)) constitute a Sm domain.

Belongs to the snRNP core protein family. Belongs to the 40S cdc5-associated complex (or cwf complex), a spliceosome sub-complex reminiscent of a late-stage spliceosome composed of the U2, U5 and U6 snRNAs and at least brr2, cdc5, cwf2/prp3, cwf3/syf1, cwf4/syf3, cwf5/ecm2, spp42/cwf6, cwf7/spf27, cwf8, cwf9, cwf10, cwf11, cwf12, prp45/cwf13, cwf14, cwf15, cwf16, cwf17, cwf18, cwf19, cwf20, cwf21, cwf22, cwf23, cwf24, cwf25, cwf26, cyp7/cwf27, cwf28, cwf29/ist3, lea1, msl1, prp5/cwf1, prp10, prp12/sap130, prp17, prp22, sap61, sap62, sap114, sap145, slu7, smb1, smd1, smd3, smf1, smg1 and syf2. Interacts with saf5; the interaction is direct.

Its subcellular location is the nucleus. The protein resides in the cytoplasm. It is found in the cytosol. In terms of biological role, plays a role in pre-mRNA splicing as a core component of the spliceosomal U1, U2, U4 and U5 small nuclear ribonucleoproteins (snRNPs), the building blocks of the spliceosome. This Schizosaccharomyces pombe (strain 972 / ATCC 24843) (Fission yeast) protein is Small nuclear ribonucleoprotein Sm D3 (smd3).